A 189-amino-acid polypeptide reads, in one-letter code: MDKTTLSVNACNLEYVREKAIVGVQAAKTSTLIFFVIILAISALLLWFQTSDNPVFNELTRYMRIKNTVNDWKSLTDSKTKLESDRGRLLAAGKDDIFEFKCVDFGAYFIAMRLDKKTYLPQAIRRGTGDAWMVKKAAKVDPSAQQFCQYLIKHKSNNVITCGNEMLNELGYSGYFMSPHWCSDLSNME.

Residues 1-28 (MDKTTLSVNACNLEYVREKAIVGVQAAK) are Intravirion-facing. A helical membrane pass occupies residues 29–49 (TSTLIFFVIILAISALLLWFQ). Residues 50-189 (TSDNPVFNEL…HWCSDLSNME (140 aa)) are Virion surface-facing.

This sequence belongs to the orthopoxvirus OPG107 family. Part of a stable entry-fusion complex (EFC) which is at least composed of proteins OPG143, OPG147, OPG155, OPG86, OPG94, OPG107, OPG104, and OPG099. Formation of the viral membrane is necessary for the assembly of the complex. Contains two intramolecular disulfide bonds. They are created by the viral disulfide bond formation pathway, a poxvirus-specific pathway that operates on the cytoplasmic side of the MV membranes.

The protein resides in the virion membrane. The protein localises to the host endoplasmic reticulum membrane. Its function is as follows. Envelope protein part of the entry-fusion complex responsible for the virus membrane fusion with host cell membrane during virus entry. Also plays a role in cell-cell fusion (syncytium formation). This chain is MPXVgp092 (OPG107), found in Monkeypox virus.